Consider the following 311-residue polypeptide: Long form salivary protein D7L1 (311 aa).

An N-terminal signal peptide occupies residues 1–21 (MIVTGVLLFILLELFAQGSQA). 4 cysteine pairs are disulfide-bonded: Cys-37–Cys-73, Cys-69–Cys-128, Cys-178–Cys-211, and Cys-252–Cys-263.

It belongs to the PBP/GOBP family.

It is found in the secreted. Functionally, modulates blood feeding of female mosquitoes on vertebrate species by binding and sequestering different mediators involved in the host response. Binds leukotriene C4 and U-46619, a stable analog of thromboxane A2. Inhibits agonist-induced platelet aggregation. Exhibits vasodilating activity. This Anopheles gambiae (African malaria mosquito) protein is Long form salivary protein D7L1.